Here is a 433-residue protein sequence, read N- to C-terminus: Serine--tRNA ligase (433 aa).

235-237 (TSE) is a binding site for L-serine. 266–268 (RSE) lines the ATP pocket. An L-serine-binding site is contributed by Glu289. An ATP-binding site is contributed by 353-356 (EISS). Ser388 serves as a coordination point for L-serine.

Belongs to the class-II aminoacyl-tRNA synthetase family. Type-1 seryl-tRNA synthetase subfamily. As to quaternary structure, homodimer. The tRNA molecule binds across the dimer.

It localises to the cytoplasm. It carries out the reaction tRNA(Ser) + L-serine + ATP = L-seryl-tRNA(Ser) + AMP + diphosphate + H(+). The enzyme catalyses tRNA(Sec) + L-serine + ATP = L-seryl-tRNA(Sec) + AMP + diphosphate + H(+). It functions in the pathway aminoacyl-tRNA biosynthesis; selenocysteinyl-tRNA(Sec) biosynthesis; L-seryl-tRNA(Sec) from L-serine and tRNA(Sec): step 1/1. In terms of biological role, catalyzes the attachment of serine to tRNA(Ser). Is also able to aminoacylate tRNA(Sec) with serine, to form the misacylated tRNA L-seryl-tRNA(Sec), which will be further converted into selenocysteinyl-tRNA(Sec). This is Serine--tRNA ligase from Burkholderia thailandensis (strain ATCC 700388 / DSM 13276 / CCUG 48851 / CIP 106301 / E264).